The chain runs to 484 residues: Glutamate--tRNA ligase (484 aa).

The 'HIGH' region motif lies at 11-21 (PSPTGYLHIGN). Residues 252 to 256 (KLSKR) carry the 'KMSKS' region motif. K255 is a binding site for ATP.

This sequence belongs to the class-I aminoacyl-tRNA synthetase family. Glutamate--tRNA ligase type 1 subfamily. As to quaternary structure, monomer.

The protein localises to the cytoplasm. It carries out the reaction tRNA(Glu) + L-glutamate + ATP = L-glutamyl-tRNA(Glu) + AMP + diphosphate. Its function is as follows. Catalyzes the attachment of glutamate to tRNA(Glu) in a two-step reaction: glutamate is first activated by ATP to form Glu-AMP and then transferred to the acceptor end of tRNA(Glu). The chain is Glutamate--tRNA ligase from Staphylococcus saprophyticus subsp. saprophyticus (strain ATCC 15305 / DSM 20229 / NCIMB 8711 / NCTC 7292 / S-41).